The sequence spans 141 residues: Large ribosomal subunit protein uL11B (141 aa).

This sequence belongs to the universal ribosomal protein uL11 family. Part of the ribosomal stalk of the 50S ribosomal subunit. Interacts with L10 and the large rRNA to form the base of the stalk. L10 forms an elongated spine to which L12 dimers bind in a sequential fashion forming a multimeric L10(L12)X complex. In terms of processing, one or more lysine residues are methylated.

Its function is as follows. Forms part of the ribosomal stalk which helps the ribosome interact with GTP-bound translation factors. This chain is Large ribosomal subunit protein uL11B, found in Halalkalibacterium halodurans (strain ATCC BAA-125 / DSM 18197 / FERM 7344 / JCM 9153 / C-125) (Bacillus halodurans).